The primary structure comprises 474 residues: Carbohydrate sulfotransferase 3 (474 aa).

Topologically, residues 1–19 (MEKGLALPQDCRDLVHNLK) are cytoplasmic. The chain crosses the membrane as a helical; Signal-anchor for type II membrane protein span at residues 20–38 (IRGRYVLFLAFVVIVFIFI). At 39-474 (EKENKIISRV…LEERGTFWVT (436 aa)) the chain is on the lumenal side. Asparagine 63, asparagine 74, and asparagine 96 each carry an N-linked (GlcNAc...) asparagine glycan. 137–143 (TRTGSSF) is a binding site for 3'-phosphoadenylyl sulfate. N-linked (GlcNAc...) asparagine glycosylation is present at asparagine 252. 297 to 305 (RDPRAVLAS) lines the 3'-phosphoadenylyl sulfate pocket. Residues asparagine 415 and asparagine 459 are each glycosylated (N-linked (GlcNAc...) asparagine).

Belongs to the sulfotransferase 1 family. Gal/GlcNAc/GalNAc subfamily. Post-translationally, N-glycosylated.

It localises to the golgi apparatus membrane. The enzyme catalyses chondroitin beta-D-glucuronate + n 3'-phosphoadenylyl sulfate = chondroitin 6'-sulfate + n adenosine 3',5'-bisphosphate + n H(+). The catalysed reaction is 3'-phosphoadenylyl sulfate + keratan = adenosine 3',5'-bisphosphate + keratan 6'-sulfate.. In terms of biological role, sulfotransferase that utilizes 3'-phospho-5'-adenylyl sulfate (PAPS) as sulfonate donor to catalyze the transfer of sulfate to position 6 of the N-acetylgalactosamine (GalNAc) residue of chondroitin. Chondroitin sulfate constitutes the predominant proteoglycan present in cartilage and is distributed on the surfaces of many cells and extracellular matrices. Catalyzes with a lower efficiency the sulfation of Gal residues of keratan sulfate, another glycosaminoglycan. Can also catalyze the sulfation of the Gal residues in sialyl N-acetyllactosamine (sialyl LacNAc) oligosaccharides. May play a role in the maintenance of naive T-lymphocytes in the spleen. The polypeptide is Carbohydrate sulfotransferase 3 (Chst3) (Rattus norvegicus (Rat)).